We begin with the raw amino-acid sequence, 259 residues long: O-antigen export system permease protein RfbA (259 aa).

A run of 6 helical transmembrane segments spans residues 33–53 (LGYL…YFIF), 73–95 (FPWQ…NAQI), 111–131 (VMME…FLFV), 142–162 (WGIP…SIIF), 176–196 (VSLG…SDMI), and 228–248 (EYIS…LSIF). The ABC transmembrane type-2 domain maps to 33–251 (LGYLWSVANP…VVGLSIFNKL (219 aa)).

The protein belongs to the ABC-2 integral membrane protein family.

It is found in the cell inner membrane. Functionally, may form an ATP-driven O-antigen export apparatus, in association with RfbB. This Klebsiella pneumoniae protein is O-antigen export system permease protein RfbA (rfbA).